We begin with the raw amino-acid sequence, 935 residues long: Ribonuclease E (935 aa).

Positions alanine 39–phenylalanine 119 constitute an S1 motif domain. Residues aspartate 302 and aspartate 345 each coordinate Mg(2+). The Zn(2+) site is built by cysteine 403 and cysteine 406. The tract at residues cysteine 403–cysteine 406 is required for zinc-mediated homotetramerization and catalytic activity. 2 disordered regions span residues threonine 571–lysine 669 and valine 698–methionine 743. Composition is skewed to basic and acidic residues over residues arginine 593 to glutamine 625 and asparagine 701 to arginine 719. Basic residues predominate over residues arginine 720 to arginine 734.

Belongs to the RNase E/G family. RNase E subfamily. Component of the RNA degradosome, which is a multiprotein complex involved in RNA processing and mRNA degradation. Within the RNA degradosome, RNase E assembles into a homotetramer formed by a dimer of dimers. Zn(2+) is required as a cofactor. The cofactor is Mg(2+).

The protein resides in the cytoplasm. It localises to the cell inner membrane. It catalyses the reaction Endonucleolytic cleavage of single-stranded RNA in A- and U-rich regions.. Endoribonuclease that plays a central role in RNA processing and decay. Required for the maturation of 5S and 16S rRNAs and the majority of tRNAs. Also involved in the degradation of most mRNAs. The chain is Ribonuclease E from Haemophilus influenzae (strain ATCC 51907 / DSM 11121 / KW20 / Rd).